The following is a 968-amino-acid chain: RNA polymerase-associated protein RapA (968 aa).

Positions 164–334 (EVGQRHAPRV…FARLRLLDPD (171 aa)) constitute a Helicase ATP-binding domain. 177 to 184 (DEVGLGKT) is an ATP binding site. A DEAH box motif is present at residues 280–283 (DEAH). Residues 490–664 (RVEWLLNYLI…ATPSEQEGLD (175 aa)) enclose the Helicase C-terminal domain.

Belongs to the SNF2/RAD54 helicase family. RapA subfamily. Interacts with the RNAP. Has a higher affinity for the core RNAP than for the holoenzyme. Its ATPase activity is stimulated by binding to RNAP.

In terms of biological role, transcription regulator that activates transcription by stimulating RNA polymerase (RNAP) recycling in case of stress conditions such as supercoiled DNA or high salt concentrations. Probably acts by releasing the RNAP, when it is trapped or immobilized on tightly supercoiled DNA. Does not activate transcription on linear DNA. Probably not involved in DNA repair. This Yersinia enterocolitica serotype O:8 / biotype 1B (strain NCTC 13174 / 8081) protein is RNA polymerase-associated protein RapA.